We begin with the raw amino-acid sequence, 505 residues long: MFS efflux pump atnC (505 aa).

The next 12 membrane-spanning stretches (helical) occupy residues 48–68, 117–137, 148–168, 181–201, 216–236, 240–260, 304–324, 343–363, 377–399, 403–425, 439–459, and 469–489; these read VLQVILLCASATLTLDIGLTV, LIGWQTVFDGIPAIFLAIPYG, VLLLCFLGLALSTAWALLVCW, LFQCLGGGPAVATAVLEATIA, LQATVLISDILANPLSSVLMA, WTPCFLGVGIQALATVLLIAL, VAGLVFSLLILTVSAESLDFL, LSLRAVVEFGLLLVVGSLLLF, LLIARLSLGLIVAGLLILSLSPT, AILVYTLGAGFQPAIMSLLASLW, TVAIILAVGGVISGPLISLMY, and WVGLPYFVASGLCAGIAGVLL.

The protein belongs to the major facilitator superfamily.

The protein localises to the membrane. It participates in secondary metabolite biosynthesis. Functionally, MFS efflux pump; part of the gene cluster that mediates the biosynthesis of aspercryptins, linear lipopeptides built from six amino acids including 2 highly unusual and nonproteogenic amino acids, 2-amino-octanoic acid (2aoa) and 2-amino-dodecanol (2adol). The polypeptide is MFS efflux pump atnC (Emericella nidulans (strain FGSC A4 / ATCC 38163 / CBS 112.46 / NRRL 194 / M139) (Aspergillus nidulans)).